We begin with the raw amino-acid sequence, 262 residues long: Expansin-A7 (262 aa).

Residues 1 to 30 (MGPISSSWSFNKFFSIVFVVFAISGEFVAG) form the signal peptide. The region spanning 55–167 (GGACGYGNLF…RRVPCQRSGG (113 aa)) is the Expansin-like EG45 domain. 3 cysteine pairs are disulfide-bonded: C58–C86, C89–C162, and C94–C100. An Expansin-like CBD domain is found at 177–257 (YWLLIFVMNV…NWSGGKTYKS (81 aa)).

Belongs to the expansin family. Expansin A subfamily.

The protein localises to the secreted. It localises to the cell wall. Its subcellular location is the membrane. Causes loosening and extension of plant cell walls by disrupting non-covalent bonding between cellulose microfibrils and matrix glucans. No enzymatic activity has been found. In Arabidopsis thaliana (Mouse-ear cress), this protein is Expansin-A7 (EXPA7).